Reading from the N-terminus, the 246-residue chain is DNA repair protein RecO (246 aa).

It belongs to the RecO family.

In terms of biological role, involved in DNA repair and RecF pathway recombination. This chain is DNA repair protein RecO, found in Methylorubrum populi (strain ATCC BAA-705 / NCIMB 13946 / BJ001) (Methylobacterium populi).